We begin with the raw amino-acid sequence, 427 residues long: Serine--tRNA ligase (427 aa).

231–233 (TAE) is a binding site for L-serine. 262 to 264 (RSE) provides a ligand contact to ATP. Position 285 (Glu285) interacts with L-serine. 349 to 352 (EISS) lines the ATP pocket. Position 385 (Ser385) interacts with L-serine.

This sequence belongs to the class-II aminoacyl-tRNA synthetase family. Type-1 seryl-tRNA synthetase subfamily. Homodimer. The tRNA molecule binds across the dimer.

The protein localises to the cytoplasm. The enzyme catalyses tRNA(Ser) + L-serine + ATP = L-seryl-tRNA(Ser) + AMP + diphosphate + H(+). It carries out the reaction tRNA(Sec) + L-serine + ATP = L-seryl-tRNA(Sec) + AMP + diphosphate + H(+). The protein operates within aminoacyl-tRNA biosynthesis; selenocysteinyl-tRNA(Sec) biosynthesis; L-seryl-tRNA(Sec) from L-serine and tRNA(Sec): step 1/1. Catalyzes the attachment of serine to tRNA(Ser). Is also able to aminoacylate tRNA(Sec) with serine, to form the misacylated tRNA L-seryl-tRNA(Sec), which will be further converted into selenocysteinyl-tRNA(Sec). In Brucella melitensis biotype 2 (strain ATCC 23457), this protein is Serine--tRNA ligase.